The following is a 161-amino-acid chain: Early E3 17.7 kDa glycoprotein (161 aa).

Residues Asn-14 and Asn-87 are each glycosylated (N-linked (GlcNAc...) asparagine; by host). Residues 102-129 (IINPAIFLFLHVLTLVIVLAMAAEVIYN) traverse the membrane as a helical segment.

The protein resides in the host membrane. This is Early E3 17.7 kDa glycoprotein from Murine adenovirus A serotype 1 (MAdV-1).